The chain runs to 598 residues: Inactive metallocarboxypeptidase ECM14 (598 aa).

The first 21 residues, 1–21, serve as a signal peptide directing secretion; it reads MRLFTHGQVLALLAFVNTISA. Positions 22 to 174 are excised as a propeptide; it reads IPSFSTNSYP…QTIYESYPSP (153 aa). The 321-residue stretch at 202–522 folds into the Peptidase M14 domain; sequence NYQPLSVIVP…NAVMMLGRFL (321 aa). Residues His264 and Glu267 each contribute to the Zn(2+) site. Residues 264 to 267, Arg322, and 339 to 340 each bind substrate; these read HARE and DR. Cysteines 333 and 356 form a disulfide. Asn349 carries N-linked (GlcNAc...) asparagine glycosylation. Residue His396 participates in Zn(2+) binding. 397-398 is a substrate binding site; it reads SY. Residues 539-598 form a disordered region; the sequence is QRPNKDDKPILNDDDDDDDADTNDDGIGRKDDSWIPDEYKGDNDRDESDGGWAFRRLRKR. Residues 550–562 show a composition bias toward acidic residues; sequence NDDDDDDDADTND. Residues 564-581 show a composition bias toward basic and acidic residues; that stretch reads GIGRKDDSWIPDEYKGDN.

It belongs to the peptidase M14 family. The cofactor is Zn(2+).

The protein localises to the vacuole. The protein resides in the secreted. Inactive carboxypeptidase that may play a role in cell wall organization and biogenesis. The chain is Inactive metallocarboxypeptidase ECM14 (ECM14) from Ajellomyces capsulatus (strain H143) (Darling's disease fungus).